A 1095-amino-acid chain; its full sequence is Putative disease resistance protein At4g11170 (1095 aa).

The TIR domain occupies 9-173; that stretch reads WRYDVFPSFR…TISKDVLEKL (165 aa). E84 is a catalytic residue. Residues 168-454 enclose the NB-ARC domain; that stretch reads DVLEKLNATP…HENYLKQMII (287 aa). LRR repeat units follow at residues 609–631, 632–654, 655–677, 679–701, 702–722, and 723–744; these read CLVE…QPLR, NLRT…MEAT, KLNR…IKNL, HLIL…INLP, SLEV…EIST, and NIRL…VKYW.

The enzyme catalyses NAD(+) + H2O = ADP-D-ribose + nicotinamide + H(+). The polypeptide is Putative disease resistance protein At4g11170 (Arabidopsis thaliana (Mouse-ear cress)).